Reading from the N-terminus, the 464-residue chain is Protein btn-1 (464 aa).

The N-terminal stretch at 1 to 22 (MNRSPSSSGLLPLPGAPSSSWA) is a signal peptide. 10 helical membrane passes run 38–58 (AVFI…VIIL), 73–93 (VVLL…PYFI), 102–122 (IFIF…TPPS), 129–149 (LIGV…FLGL), 167–187 (GAGL…GLSV), 190–210 (SLLA…LILP), 288–308 (SLFF…YTIN), 332–352 (PFYG…IAFI), 354–374 (IHHL…LTLH), and 376–396 (LLNF…EGLL).

This sequence belongs to the battenin family.

It localises to the vacuole membrane. Its function is as follows. Involved in vacuolar transport and vacuole pH homeostasis. Also required for cytokinesis. The polypeptide is Protein btn-1 (cln3) (Neurospora crassa (strain ATCC 24698 / 74-OR23-1A / CBS 708.71 / DSM 1257 / FGSC 987)).